The sequence spans 420 residues: uncharacterized protein (420 aa).

Disordered stretches follow at residues 84 to 103 (RSQA…GTSE) and 122 to 211 (SMNN…NKKS). Polar residues predominate over residues 85-103 (SQANSESTPPEHTWSGTSE). A compositionally biased stretch (basic and acidic residues) spans 184–199 (SMTDQEVEQRRKEANK). Coiled-coil stretches lie at residues 265–310 (TEKE…TATN) and 345–374 (LQFK…NFKE). Residues 399-408 (KTSSPKTSIA) show a composition bias toward polar residues. Positions 399–420 (KTSSPKTSIAGSHRRSTRSSEN) are disordered. Over residues 410–420 (SHRRSTRSSEN) the composition is skewed to basic residues.

This is an uncharacterized protein from Caenorhabditis elegans.